Reading from the N-terminus, the 301-residue chain is Homoserine O-acetyltransferase (301 aa).

Cysteine 142 functions as the Acyl-thioester intermediate in the catalytic mechanism. Residues lysine 163 and serine 192 each contribute to the substrate site. Histidine 235 acts as the Proton acceptor in catalysis. Glutamate 237 is a catalytic residue. A substrate-binding site is contributed by arginine 249.

This sequence belongs to the MetA family.

The protein resides in the cytoplasm. The catalysed reaction is L-homoserine + acetyl-CoA = O-acetyl-L-homoserine + CoA. The protein operates within amino-acid biosynthesis; L-methionine biosynthesis via de novo pathway; O-acetyl-L-homoserine from L-homoserine: step 1/1. Functionally, transfers an acetyl group from acetyl-CoA to L-homoserine, forming acetyl-L-homoserine. This chain is Homoserine O-acetyltransferase, found in Bacillus cereus (strain ZK / E33L).